We begin with the raw amino-acid sequence, 441 residues long: Glutamyl-tRNA reductase (441 aa).

Substrate-binding positions include 49 to 52 (TCNR), serine 110, 115 to 117 (EPQ), and glutamine 121. Catalysis depends on cysteine 50, which acts as the Nucleophile. 190–195 (GAGEMA) provides a ligand contact to NADP(+).

It belongs to the glutamyl-tRNA reductase family. Homodimer.

The catalysed reaction is (S)-4-amino-5-oxopentanoate + tRNA(Glu) + NADP(+) = L-glutamyl-tRNA(Glu) + NADPH + H(+). Its pathway is porphyrin-containing compound metabolism; protoporphyrin-IX biosynthesis; 5-aminolevulinate from L-glutamyl-tRNA(Glu): step 1/2. Functionally, catalyzes the NADPH-dependent reduction of glutamyl-tRNA(Glu) to glutamate 1-semialdehyde (GSA). In Sulfurihydrogenibium sp. (strain YO3AOP1), this protein is Glutamyl-tRNA reductase.